Reading from the N-terminus, the 1232-residue chain is Anion exchange protein 3 (1232 aa).

Positions 1–11 (MANGVIPPPGG) are enriched in pro residues. Disordered regions lie at residues 1–316 (MANG…KLDR) and 429–498 (NDDK…GDGH). Topologically, residues 1-708 (MANGVIPPPG…DLRDALHSQC (708 aa)) are cytoplasmic. Over residues 58-75 (DPEKPSRSYSERDFEFHR) the composition is skewed to basic and acidic residues. Composition is skewed to basic residues over residues 76 to 97 (HTSH…KLRR) and 104 to 113 (RHTRRKRKKE). Residues 134–152 (VDEEEEEEEEEEGESEAEP) are compositionally biased toward acidic residues. Phosphoserine is present on residues S167, S170, S175, and S198. Low complexity predominate over residues 200-215 (QHSSSSPSPRARASRL). Residues 267 to 279 (DDMKSHRLEDNPG) are compositionally biased toward basic and acidic residues. Basic residues predominate over residues 280–289 (VRRHLVKKPS). R295 is modified (omega-N-methylarginine). The span at 305-316 (LRRKKKKKKLDR) shows a compositional bias: basic residues. Positions 440-450 (NPSSSSMNSVL) are enriched in polar residues. The span at 481–498 (HDPDAKEKPLHMPGGDGH) shows a compositional bias: basic and acidic residues. 5 helical membrane-spanning segments follow: residues 709–731 (VAAV…GLLG), 737–774 (LMGV…LLVF), 794–816 (VWVG…SFLV), 826–847 (IFAF…YKVF), and 893–910 (ALLS…AFFL). Positions 709-1232 (VAAVLFIYFA…DEYNELHMPV (524 aa)) are membrane (anion exchange). Residues 911–925 (RKFRNSRFLGGKARR) lie on the Cytoplasmic side of the membrane. A run of 5 helical transmembrane segments spans residues 926-946 (IIGD…DYSI), 980-1002 (PFPP…LIFM), 1028-1049 (LLLI…LTAA), 1083-1128 (VTGV…IQLS), and 1155-1191 (MHLF…TVPL). C1165 carries S-palmitoyl cysteine lipidation.

The protein belongs to the anion exchanger (TC 2.A.31) family. Expressed in the heart.

The protein localises to the cell membrane. It carries out the reaction hydrogencarbonate(in) + chloride(out) = hydrogencarbonate(out) + chloride(in). Its function is as follows. Sodium-independent anion exchanger which mediates the electroneutral exchange of chloride for bicarbonate ions across the cell membrane. May be involved in the regulation of intracellular pH, and the modulation of cardiac action potential. This chain is Anion exchange protein 3 (SLC4A3), found in Homo sapiens (Human).